Consider the following 358-residue polypeptide: SPbeta prophage-derived probable integrase/recombinase YopP (358 aa).

One can recognise a Core-binding (CB) domain in the interval N23 to E114. The Tyr recombinase domain occupies K137 to M319. Residues R178, K206, H268, and H295 contribute to the active site. Catalysis depends on Y304, which acts as the O-(3'-phospho-DNA)-tyrosine intermediate.

This sequence belongs to the 'phage' integrase family.

In terms of biological role, probable recombinase that does not seem to have a role in chromosome dimer resolution per se but rather may have some facilitative role during chromosome partitioning in general. This chain is SPbeta prophage-derived probable integrase/recombinase YopP (yopP), found in Bacillus subtilis (strain 168).